The following is a 340-amino-acid chain: Fructose-1,6-bisphosphatase class 1 (340 aa).

4 residues coordinate Mg(2+): glutamate 107, aspartate 126, leucine 128, and aspartate 129. Position 215 (asparagine 215) interacts with substrate. Glutamate 287 is a Mg(2+) binding site.

The protein belongs to the FBPase class 1 family. As to quaternary structure, homotetramer. Requires Mg(2+) as cofactor.

The protein resides in the cytoplasm. It catalyses the reaction beta-D-fructose 1,6-bisphosphate + H2O = beta-D-fructose 6-phosphate + phosphate. It functions in the pathway carbohydrate biosynthesis; gluconeogenesis. The protein is Fructose-1,6-bisphosphatase class 1 of Brucella suis biovar 1 (strain 1330).